The chain runs to 614 residues: Protein NRT1/ PTR FAMILY 7.3 (614 aa).

Transmembrane regions (helical) follow at residues 41-61 (WVAGIVILLNQGLATLAFFGV) and 87-107 (WTGTVYIFSLVGAFLSDSYWG). Thr-111 carries the phosphothreonine modification. 9 helical membrane passes run 114–134 (IFQVIFVIGLSSLSLSSYMFL), 152–172 (MMEITMFYFSIYLIALGYGGY), 196–216 (IAFFSYFYLALNLGSLFSNTI), 226–246 (WALGFWASTGSAIIGLILFLV), 355–375 (PIWLCTIIYSVVFTQMASLFV), 390–410 (IPPASMSSFDILSVALFIFLY), 435–455 (MGIGLVIAVIAMIAAGIVECY), 515–535 (LCMMSMSMGNFVSSLLVTMVV), and 559–579 (FYFLLAALTSIDLVVYIACAK). Residues 592–614 (MQDMSDDDYDTESEEEREKDSKV) form a disordered region. A compositionally biased stretch (acidic residues) spans 593 to 606 (QDMSDDDYDTESEE).

Belongs to the major facilitator superfamily. Proton-dependent oligopeptide transporter (POT/PTR) (TC 2.A.17) family. High expression in roots. Barely detected in shoots. Expressed in root pericycle cells close to the xylem.

Its subcellular location is the cell membrane. Its function is as follows. Low-affinity proton-dependent bidirectional nitrate transporter. Involved in nitrate loading into xylem and not in nitrate uptake. Not involved in histidine or dipeptides transport. The sequence is that of Protein NRT1/ PTR FAMILY 7.3 (NPF7.3) from Arabidopsis thaliana (Mouse-ear cress).